A 254-amino-acid polypeptide reads, in one-letter code: Pyridoxine 5'-phosphate synthase (254 aa).

Position 12 (asparagine 12) interacts with 3-amino-2-oxopropyl phosphate. 14-15 is a 1-deoxy-D-xylulose 5-phosphate binding site; sequence DH. Arginine 23 provides a ligand contact to 3-amino-2-oxopropyl phosphate. Catalysis depends on histidine 48, which acts as the Proton acceptor. 1-deoxy-D-xylulose 5-phosphate is bound by residues arginine 50 and histidine 55. The Proton acceptor role is filled by glutamate 75. Threonine 105 contributes to the 1-deoxy-D-xylulose 5-phosphate binding site. Catalysis depends on histidine 199, which acts as the Proton donor. 3-amino-2-oxopropyl phosphate contacts are provided by residues glycine 200 and 221 to 222; that span reads GF.

Belongs to the PNP synthase family. As to quaternary structure, homooctamer; tetramer of dimers.

The protein resides in the cytoplasm. The catalysed reaction is 3-amino-2-oxopropyl phosphate + 1-deoxy-D-xylulose 5-phosphate = pyridoxine 5'-phosphate + phosphate + 2 H2O + H(+). Its pathway is cofactor biosynthesis; pyridoxine 5'-phosphate biosynthesis; pyridoxine 5'-phosphate from D-erythrose 4-phosphate: step 5/5. Functionally, catalyzes the complicated ring closure reaction between the two acyclic compounds 1-deoxy-D-xylulose-5-phosphate (DXP) and 3-amino-2-oxopropyl phosphate (1-amino-acetone-3-phosphate or AAP) to form pyridoxine 5'-phosphate (PNP) and inorganic phosphate. In Rhodopseudomonas palustris (strain HaA2), this protein is Pyridoxine 5'-phosphate synthase.